Here is a 756-residue protein sequence, read N- to C-terminus: 1,4-alpha-glucan branching enzyme GlgB (756 aa).

The active-site Nucleophile is the Asp431. The Proton donor role is filled by Glu484.

The protein belongs to the glycosyl hydrolase 13 family. GlgB subfamily. Monomer.

The enzyme catalyses Transfers a segment of a (1-&gt;4)-alpha-D-glucan chain to a primary hydroxy group in a similar glucan chain.. Its pathway is glycan biosynthesis; glycogen biosynthesis. Catalyzes the formation of the alpha-1,6-glucosidic linkages in glycogen by scission of a 1,4-alpha-linked oligosaccharide from growing alpha-1,4-glucan chains and the subsequent attachment of the oligosaccharide to the alpha-1,6 position. This chain is 1,4-alpha-glucan branching enzyme GlgB, found in Prochlorococcus marinus (strain MIT 9303).